Consider the following 564-residue polypeptide: Probable diguanylate cyclase DgcQ (564 aa).

Transmembrane regions (helical) follow at residues 20–40 (LGPGHIVNLCFIVVLLFSTLL) and 360–380 (IALTLLWALFTTMLLISWYVI). In terms of domain architecture, GGDEF spans 428-563 (HPFSVIQVDL…GRNRVFASDN (136 aa)). Position 436 (aspartate 436) interacts with Mg(2+). Substrate contacts are provided by asparagine 444, histidine 449, and aspartate 453. Glutamate 479 contacts Mg(2+). The Proton acceptor role is filled by glutamate 479.

As to quaternary structure, homodimer. The cofactor is Mg(2+).

It localises to the cell inner membrane. It catalyses the reaction 2 GTP = 3',3'-c-di-GMP + 2 diphosphate. It participates in glycan metabolism; bacterial cellulose biosynthesis. It functions in the pathway purine metabolism; 3',5'-cyclic di-GMP biosynthesis. In terms of biological role, catalyzes the synthesis of cyclic-di-GMP (c-di-GMP) via the condensation of 2 GTP molecules. Cyclic-di-GMP is a second messenger which controls cell surface-associated traits in bacteria. Involved in the regulation of cellulose production. This chain is Probable diguanylate cyclase DgcQ, found in Shigella dysenteriae serotype 1 (strain Sd197).